The primary structure comprises 418 residues: Histidine--tRNA ligase (418 aa).

This sequence belongs to the class-II aminoacyl-tRNA synthetase family.

The protein resides in the cytoplasm. It carries out the reaction tRNA(His) + L-histidine + ATP = L-histidyl-tRNA(His) + AMP + diphosphate + H(+). This is Histidine--tRNA ligase from Methanococcus vannielii (strain ATCC 35089 / DSM 1224 / JCM 13029 / OCM 148 / SB).